We begin with the raw amino-acid sequence, 505 residues long: Sodium/sialic acid symporter NanT (505 aa).

The next 5 membrane-spanning stretches (helical) occupy residues 9 to 29, 45 to 65, 80 to 100, 128 to 148, and 155 to 175; these read LNYI…VYFA, IPGW…ITFM, IGQY…IPFF, FMLF…LALM, and PLMI…LGGI. Ala-56 lines the Na(+) pocket. Thr-58 is a binding site for N-acetyl-alpha-neuraminate. Leu-59 lines the Na(+) pocket. Residues Ser-60, Thr-63, Gln-82, and Arg-135 each coordinate N-acetyl-alpha-neuraminate. Asp-182 contacts Na(+). Helical transmembrane passes span 183 to 203, 227 to 247, 280 to 300, and 318 to 338; these read VIQG…ICFN, FSWS…FFAS, LVAC…AYYT, and FYVI…AIFA. Na(+) contacts are provided by Ala-339, Ser-342, Ser-343, Ser-345, and Ser-346. 4 consecutive transmembrane segments (helical) span residues 378–398, 406–426, 435–455, and 457–477; these read TLTV…IMSN, FNSL…LGIF, ALLG…ATDL, and FFFY…LTAP.

This sequence belongs to the sodium:solute symporter (SSF) (TC 2.A.21) family.

The protein localises to the cell inner membrane. It carries out the reaction N-acetyl-alpha-neuraminate(out) + 2 Na(+)(out) = N-acetyl-alpha-neuraminate(in) + 2 Na(+)(in). Functionally, symporter that uses the Na(+) gradient as the driving force for the uptake of the sialic acid N-acetylneuraminic acid (Neu5Ac). Might play a role in persistence after colonization. This is Sodium/sialic acid symporter NanT from Aliivibrio fischeri (strain ATCC 700601 / ES114) (Vibrio fischeri).